The chain runs to 393 residues: Synaptic vesicle membrane protein VAT-1 homolog (393 aa).

The disordered stretch occupies residues 1-40 (MSDEREVAEAATGEDASSPPPKTEAASDPQHPAASEGAAA). An N-acetylserine modification is found at Ser-2. Phosphoserine is present on residues Ser-2, Ser-18, Ser-27, Ser-35, and Ser-44.

Belongs to the zinc-containing alcohol dehydrogenase family. Quinone oxidoreductase subfamily. As to expression, expressed in brain. Also expressed in glioblastoma cells.

Its subcellular location is the cytoplasm. It is found in the mitochondrion outer membrane. Functionally, possesses ATPase activity. Plays a part in calcium-regulated keratinocyte activation in epidermal repair mechanisms. Has no effect on cell proliferation. Negatively regulates mitochondrial fusion in cooperation with mitofusin proteins (MFN1-2). The chain is Synaptic vesicle membrane protein VAT-1 homolog (VAT1) from Homo sapiens (Human).